The following is a 446-amino-acid chain: Amino-acid acetyltransferase (446 aa).

Residues 299 to 431 (EQVRDAEIDD…SHLPMKKQKL (133 aa)) form the N-acetyltransferase domain.

The protein belongs to the acetyltransferase family. ArgA subfamily.

It is found in the cytoplasm. The catalysed reaction is L-glutamate + acetyl-CoA = N-acetyl-L-glutamate + CoA + H(+). The protein operates within amino-acid biosynthesis; L-arginine biosynthesis; N(2)-acetyl-L-ornithine from L-glutamate: step 1/4. This Aliivibrio fischeri (strain MJ11) (Vibrio fischeri) protein is Amino-acid acetyltransferase.